The primary structure comprises 950 residues: Translation initiation factor IF-2 (950 aa).

2 disordered regions span residues Lys69–Ala92 and Lys128–Pro352. 5 stretches are compositionally biased toward basic and acidic residues: residues Ala77–Arg86, Lys128–Ala158, Ala165–Lys186, Lys200–Arg234, and Asn291–Arg312. 2 stretches are compositionally biased toward polar residues: residues Asn322–Gln336 and Tyr343–Pro352. The tr-type G domain maps to Glu448–Lys619. Positions Gly457 to Thr464 are G1. Residue Gly457 to Thr464 coordinates GTP. Positions Gly482–His486 are G2. The segment at Asp503–Gly506 is G3. Residues Asp503–His507 and Asn557–Asp560 each bind GTP. The tract at residues Asn557–Asp560 is G4. A G5 region spans residues Ser595–Lys597.

The protein belongs to the TRAFAC class translation factor GTPase superfamily. Classic translation factor GTPase family. IF-2 subfamily.

It is found in the cytoplasm. In terms of biological role, one of the essential components for the initiation of protein synthesis. Protects formylmethionyl-tRNA from spontaneous hydrolysis and promotes its binding to the 30S ribosomal subunits. Also involved in the hydrolysis of GTP during the formation of the 70S ribosomal complex. In Lactococcus lactis subsp. cremoris (strain SK11), this protein is Translation initiation factor IF-2.